The following is a 507-amino-acid chain: Transposase for insertion sequences IS1326/IS1353 (507 aa).

Residues 6 to 68 (ILSAIRRWHF…PFEPKLRQWL (63 aa)) enclose the HTH IS21-type domain. The H-T-H motif DNA-binding region spans 19 to 40 (ASIREIARRSGLSRNTVRKYLQ). The 181-residue stretch at 122-302 (GCFIPLRFAC…TVQEAFADEQ (181 aa)) folds into the Integrase catalytic domain.

It belongs to the transposase IS21/IS408/IS1162 family.

Its function is as follows. Required for the transposition of the insertion element. This Pseudomonas aeruginosa protein is Transposase for insertion sequences IS1326/IS1353 (istA).